The following is a 147-amino-acid chain: D-aminoacyl-tRNA deacylase (147 aa).

The short motif at 136–137 (GP) is the Gly-cisPro motif, important for rejection of L-amino acids element.

Belongs to the DTD family. Homodimer.

The protein localises to the cytoplasm. It carries out the reaction glycyl-tRNA(Ala) + H2O = tRNA(Ala) + glycine + H(+). The catalysed reaction is a D-aminoacyl-tRNA + H2O = a tRNA + a D-alpha-amino acid + H(+). An aminoacyl-tRNA editing enzyme that deacylates mischarged D-aminoacyl-tRNAs. Also deacylates mischarged glycyl-tRNA(Ala), protecting cells against glycine mischarging by AlaRS. Acts via tRNA-based rather than protein-based catalysis; rejects L-amino acids rather than detecting D-amino acids in the active site. By recycling D-aminoacyl-tRNA to D-amino acids and free tRNA molecules, this enzyme counteracts the toxicity associated with the formation of D-aminoacyl-tRNA entities in vivo and helps enforce protein L-homochirality. The protein is D-aminoacyl-tRNA deacylase of Streptococcus suis (strain 98HAH33).